The following is a 198-amino-acid chain: Protein GrpE (198 aa).

This sequence belongs to the GrpE family. In terms of assembly, homodimer.

Its subcellular location is the cytoplasm. Functionally, participates actively in the response to hyperosmotic and heat shock by preventing the aggregation of stress-denatured proteins, in association with DnaK and GrpE. It is the nucleotide exchange factor for DnaK and may function as a thermosensor. Unfolded proteins bind initially to DnaJ; upon interaction with the DnaJ-bound protein, DnaK hydrolyzes its bound ATP, resulting in the formation of a stable complex. GrpE releases ADP from DnaK; ATP binding to DnaK triggers the release of the substrate protein, thus completing the reaction cycle. Several rounds of ATP-dependent interactions between DnaJ, DnaK and GrpE are required for fully efficient folding. This Lysinibacillus sphaericus (Bacillus sphaericus) protein is Protein GrpE.